A 439-amino-acid polypeptide reads, in one-letter code: Adenylosuccinate synthetase (439 aa).

GTP contacts are provided by residues 14-20 and 42-44; these read GDEGKGK and GHT. Residue aspartate 15 is the Proton acceptor of the active site. Residues aspartate 15 and glycine 42 each contribute to the Mg(2+) site. Residues 15–18, 40–43, threonine 130, arginine 144, glutamine 225, threonine 240, and arginine 304 each bind IMP; these read DEGK and NAGH. Residue histidine 43 is the Proton donor of the active site. Residue 300 to 306 coordinates substrate; the sequence is TTTGRRR. GTP-binding positions include arginine 306, 332 to 334, and 414 to 416; these read KLD and SLG.

The protein belongs to the adenylosuccinate synthetase family. In terms of assembly, homodimer. The cofactor is Mg(2+).

It localises to the cytoplasm. It carries out the reaction IMP + L-aspartate + GTP = N(6)-(1,2-dicarboxyethyl)-AMP + GDP + phosphate + 2 H(+). The protein operates within purine metabolism; AMP biosynthesis via de novo pathway; AMP from IMP: step 1/2. In terms of biological role, plays an important role in the de novo pathway of purine nucleotide biosynthesis. Catalyzes the first committed step in the biosynthesis of AMP from IMP. The sequence is that of Adenylosuccinate synthetase from Prochlorococcus marinus (strain MIT 9303).